The sequence spans 73 residues: Large ribosomal subunit protein bL31 (73 aa).

This sequence belongs to the bacterial ribosomal protein bL31 family. Type A subfamily. Part of the 50S ribosomal subunit.

Binds the 23S rRNA. The sequence is that of Large ribosomal subunit protein bL31 (rpmE) from Roseobacter denitrificans (strain ATCC 33942 / OCh 114) (Erythrobacter sp. (strain OCh 114)).